The sequence spans 80 residues: Small ribosomal subunit protein bS16 (80 aa).

This sequence belongs to the bacterial ribosomal protein bS16 family.

This is Small ribosomal subunit protein bS16 from Blochmanniella pennsylvanica (strain BPEN).